The sequence spans 101 residues: uncharacterized protein (101 aa).

The segment at 76-101 (KGNVTRRRKKTHLGNDDGKKEAQEKM) is disordered. Over residues 88–101 (LGNDDGKKEAQEKM) the composition is skewed to basic and acidic residues.

This is an uncharacterized protein from Homo sapiens (Human).